Here is a 913-residue protein sequence, read N- to C-terminus: MLENEYQLEYFKENGFIRKICKKCGSAFWTLDPNREICGDAPCEPYQFIGNPIFTKHSLTEMREAYLSFFERHGHTRINRYPVAARWRDDIYLTIASIADFQPFVTSGVCPPPANPLTISQPCIRLNDLDNVGRSGRHFTCFEMMAHHAFNTDEKPIYWKDRCLELCSGFIESLGGNVFDLTYKENPWFGGGNAGPSVEVLMGGLEVATLVFMNLSRKNSGKPPVSIDGKDYYEMPLRIVDTGYGLERFTWASCGTPTAYDAVFPEMIPRILTAAGMEDRLENPEVERILGLNAKFAGLMDIRGEKIRDLRQQVADATNISVAKLEEIIVPMETVYALCDHTRCLAYMLGDLIVPSNVREGYLARLVLRRSIRMMQDLNMDDDLGDLVVSQMKTIGLANFEQDEDIVRHIINREVEKYDTTIERGTRTVQRVGQTYVKKNEPVPLAELITLYDSHGIPVDLMGKILKDTGAEFEIPDDFDSQIADMHSENETEKPVSPLAKYAERIAKIPETRKSFYERPADMEFDATVLDIFDNYVVLDATLFYPEGGGQPSDTGMLVTKSTMVRVDEVVKWENVILHKVRENTLKRGDRVKGVLDEDRRWALMRHHSATHMVLRAAKEVLGPHVHQAGSQLSTDVARLDIRHYTHITPEELKQMETIANRLVMENLPTMVKIENRVKAEQKFGFALYQGGVPPGKDIRVVQMGAEVQACAGTHCQSTGEIGPIKILKLEHIQDGVERIEFAAGFAALDAMQHIQSLLNTSADTLSVQTENLPGSVDRFFTEWKDQRKEIEKLRAKIAELELSRIEGINIGGVEVVIKQIDVSRKELVTVAGKIAERGGVTVLITTADGLGVVASSGTGKIHAGKLVGEVCAELGGKGGGKENLAQGAGADPSAVGKALLKAESFIRAEFNS.

4 residues coordinate Zn(2+): histidine 608, histidine 612, cysteine 711, and histidine 715.

Belongs to the class-II aminoacyl-tRNA synthetase family. Zn(2+) is required as a cofactor.

The protein localises to the cytoplasm. The catalysed reaction is tRNA(Ala) + L-alanine + ATP = L-alanyl-tRNA(Ala) + AMP + diphosphate. Catalyzes the attachment of alanine to tRNA(Ala) in a two-step reaction: alanine is first activated by ATP to form Ala-AMP and then transferred to the acceptor end of tRNA(Ala). Also edits incorrectly charged Ser-tRNA(Ala) and Gly-tRNA(Ala) via its editing domain. This Methanocorpusculum labreanum (strain ATCC 43576 / DSM 4855 / Z) protein is Alanine--tRNA ligase.